The primary structure comprises 195 residues: Holliday junction branch migration complex subunit RuvA (195 aa).

The domain I stretch occupies residues 1 to 64 (MIASIRGVIQ…EDALTLYGFS (64 aa)). A domain II region spans residues 65 to 139 (DNAQRSLFEQ…GKIDFRQLAA (75 aa)). The segment at 139–143 (ASGST) is flexible linker. The segment at 144 to 195 (SVSALDRELSEILVSLGYSAAEAAAAIASLPSDAPPTLEERLRLALRYFGSA) is domain III.

Belongs to the RuvA family. Homotetramer. Forms an RuvA(8)-RuvB(12)-Holliday junction (HJ) complex. HJ DNA is sandwiched between 2 RuvA tetramers; dsDNA enters through RuvA and exits via RuvB. An RuvB hexamer assembles on each DNA strand where it exits the tetramer. Each RuvB hexamer is contacted by two RuvA subunits (via domain III) on 2 adjacent RuvB subunits; this complex drives branch migration. In the full resolvosome a probable DNA-RuvA(4)-RuvB(12)-RuvC(2) complex forms which resolves the HJ.

It is found in the cytoplasm. In terms of biological role, the RuvA-RuvB-RuvC complex processes Holliday junction (HJ) DNA during genetic recombination and DNA repair, while the RuvA-RuvB complex plays an important role in the rescue of blocked DNA replication forks via replication fork reversal (RFR). RuvA specifically binds to HJ cruciform DNA, conferring on it an open structure. The RuvB hexamer acts as an ATP-dependent pump, pulling dsDNA into and through the RuvAB complex. HJ branch migration allows RuvC to scan DNA until it finds its consensus sequence, where it cleaves and resolves the cruciform DNA. The protein is Holliday junction branch migration complex subunit RuvA of Chloroflexus aggregans (strain MD-66 / DSM 9485).